The sequence spans 274 residues: MSTYFISDIHGCYEEFRILLEKSSFNDKKDYLWIAGDLVSRGPDSLEVVKYLYSLKDRVQIVLGNHDINLIAVHAGIKDNKKENYFDEFLSSPDSVELINWLRCQSFLKVDEKRKIIMSHAGISPQWDINIAKVCALEIEDRLSHKNYALFLKEIYHNNIDFWRLDLNQLDRLRYSMNSFTRMRYCYPDGRLNMFCKKSPDFVKYPLRPWFLMPSSISKVYSIFFGHWSSLKGTHVPKPFFPLDAGCCWGEELVMLRWEDGKWFSQAYLSKKCI.

Belongs to the Ap4A hydrolase family.

The catalysed reaction is P(1),P(4)-bis(5'-adenosyl) tetraphosphate + H2O = 2 ADP + 2 H(+). Functionally, hydrolyzes diadenosine 5',5'''-P1,P4-tetraphosphate to yield ADP. The protein is Bis(5'-nucleosyl)-tetraphosphatase, symmetrical of Buchnera aphidicola subsp. Acyrthosiphon pisum (strain Tuc7).